A 229-amino-acid polypeptide reads, in one-letter code: Peptidase E (229 aa).

Residues Ser-120, Asp-135, and His-157 each act as charge relay system in the active site.

It belongs to the peptidase S51 family.

It is found in the cytoplasm. The enzyme catalyses Dipeptidase E catalyzes the hydrolysis of dipeptides Asp-|-Xaa. It does not act on peptides with N-terminal Glu, Asn or Gln, nor does it cleave isoaspartyl peptides.. In terms of biological role, hydrolyzes dipeptides containing N-terminal aspartate residues. May play a role in allowing the cell to use peptide aspartate to spare carbon otherwise required for the synthesis of the aspartate family of amino acids. This is Peptidase E from Shigella flexneri serotype 5b (strain 8401).